A 417-amino-acid polypeptide reads, in one-letter code: Cobalamin binding intrinsic factor (417 aa).

Residues 1–18 form the signal peptide; sequence MAWLTLYLLSVLWAVAGT. 3 cysteine pairs are disulfide-bonded: C26-C246, C103-C288, and C143-C182. D171 lines the cob(II)alamin pocket. S191 carries the phosphoserine modification. Residues D222 and Q270 each contribute to the cob(II)alamin site. N-linked (GlcNAc...) asparagine glycans are attached at residues N311 and N330. Residues 365-370 and 386-395 contribute to the cob(II)alamin site; these read SWGLIV and WEFLSGKTPL. N413 carries an N-linked (GlcNAc...) asparagine glycan.

Belongs to the eukaryotic cobalamin transport proteins family. In terms of assembly, interacts with CUBN (via CUB domains). Gastric mucosa.

It is found in the secreted. Promotes absorption of the essential vitamin cobalamin (Cbl) in the ileum. After interaction with CUBN, the CBLIF-cobalamin complex is internalized via receptor-mediated endocytosis. This chain is Cobalamin binding intrinsic factor (Cblif), found in Mus musculus (Mouse).